Consider the following 270-residue polypeptide: Thymidine kinase 2, mitochondrial (270 aa).

The N-terminal 38 residues, 1–38 (MLLRSLRSWAARSPRSVGPGSSGSPGSLDSGAGPLWAP), are a transit peptide targeting the mitochondrion. The tract at residues 1–54 (MLLRSLRSWAARSPRSVGPGSSGSPGSLDSGAGPLWAPRRAWPPDKDRENDKEK) is disordered. Low complexity predominate over residues 13 to 34 (SPRSVGPGSSGSPGSLDSGAGP). Basic and acidic residues predominate over residues 42 to 54 (WPPDKDRENDKEK). 62 to 70 (GNIASGKTT) serves as a coordination point for ATP. Catalysis depends on Glu138, which acts as the Proton acceptor.

Belongs to the DCK/DGK family. As to quaternary structure, homodimer. In terms of tissue distribution, found in most tissues; highly expressed in liver.

The protein resides in the mitochondrion. It carries out the reaction thymidine + ATP = dTMP + ADP + H(+). The catalysed reaction is 2'-deoxycytidine + ATP = dCMP + ADP + H(+). It catalyses the reaction 2'-deoxyuridine + ATP = dUMP + ADP + H(+). In terms of biological role, phosphorylates thymidine, deoxycytidine, and deoxyuridine in the mitochondrial matrix. In non-replicating cells, where cytosolic dNTP synthesis is down-regulated, mtDNA synthesis depends solely on TK2 and DGUOK. The chain is Thymidine kinase 2, mitochondrial (Tk2) from Mus musculus (Mouse).